Here is a 354-residue protein sequence, read N- to C-terminus: C-C chemokine receptor type 5 (354 aa).

The Extracellular segment spans residues 1–32; the sequence is MDFQGSVPTYSYDIDYGMSAPCQKINVKQIAA. A glycan (O-linked (GalNAc...) serine) is linked at Ser6. Sulfotyrosine is present on residues Tyr10, Tyr12, and Tyr16. Disulfide bonds link Cys22–Cys271 and Cys103–Cys180. A helical transmembrane segment spans residues 33–60; the sequence is QLLPPLYSLVFIFGFVGNMMVFLILISC. Residues 61–70 lie on the Cytoplasmic side of the membrane; the sequence is KKLKSVTDIY. The helical transmembrane segment at 71-91 threads the bilayer; that stretch reads LLNLAISDLLFLLTLPFWAHY. Topologically, residues 92-104 are extracellular; sequence AANEWVFGNIMCK. A helical membrane pass occupies residues 105 to 126; the sequence is VFTGLYHIGYFGGIFFIILLTI. The Cytoplasmic portion of the chain corresponds to 127–143; that stretch reads DRYLAIVHAVFALKVRT. Residues 144 to 168 traverse the membrane as a helical segment; sequence VNFGVITSVVTWAVAVFASLPEIIF. Topologically, residues 169 to 200 are extracellular; sequence TRSQKEGFHYTCSPHFPHTQYHFWKSFQTLKM. A helical transmembrane segment spans residues 201 to 220; it reads VILSLILPLLVMVICYSGIL. The Cytoplasmic portion of the chain corresponds to 221-237; sequence HTLFRCRNEKKRHRAVR. Residues 238–262 traverse the membrane as a helical segment; that stretch reads LIFAIMIVYFLFWTPYNIVLLLTTF. The Extracellular portion of the chain corresponds to 263 to 279; sequence QEFFGLNNCSSSNRLDQ. A helical transmembrane segment spans residues 280 to 303; sequence AMQATETLGMTHCCLNPVIYAFVG. Topologically, residues 304–354 are cytoplasmic; the sequence is EKFRSYLSVFFRKHMVKRFCKRCSIFQQDNPDRASSVYTRSTGEHEVSTGL. Residues Cys323 and Cys326 are each lipidated (S-palmitoyl cysteine). Ser338, Ser339, Ser344, and Ser351 each carry phosphoserine; by BARK1.

It belongs to the G-protein coupled receptor 1 family. Interacts with PRAF2. Efficient ligand binding to CCL3/MIP-1alpha and CCL4/MIP-1beta requires sulfation, O-glycosylation and sialic acid modifications. Glycosylation on Ser-6 is required for efficient binding of CCL4. Interacts with GRK2. Interacts with ARRB1 and ARRB2. Interacts with CNIH4. Interacts with S100A4; this interaction stimulates T-lymphocyte chemotaxis. Post-translationally, sulfated on at least 2 of the N-terminal tyrosines. Sulfation is required for efficient binding of the chemokines, CCL3 and CCL4. O-glycosylated, but not N-glycosylated. Ser-6 appears to be the major site. Also sialylated glycans present which contribute to chemokine binding. In terms of processing, palmitoylation in the C-terminal is important for cell surface expression. Post-translationally, phosphorylation on serine residues in the C-terminal is stimulated by binding CC chemokines especially by APO-RANTES.

The protein localises to the cell membrane. Functionally, receptor for a number of inflammatory CC-chemokines including CCL3/MIP-1-alpha, CCL4/MIP-1-beta and RANTES and subsequently transduces a signal by increasing the intracellular calcium ion level. May play a role in the control of granulocytic lineage proliferation or differentiation. Participates in T-lymphocyte migration to the infection site by acting as a chemotactic receptor. In Mus musculus (Mouse), this protein is C-C chemokine receptor type 5 (Ccr5).